A 215-amino-acid chain; its full sequence is Flagellin B1 (215 aa).

Positions 1–12 (MSVKNFMNNKKG) are excised as a propeptide.

The protein belongs to the archaeal flagellin family.

The protein resides in the archaeal flagellum. Its function is as follows. Flagellin is the subunit protein which polymerizes to form the filaments of archaeal flagella. This Methanococcus vannielii (strain ATCC 35089 / DSM 1224 / JCM 13029 / OCM 148 / SB) protein is Flagellin B1 (flaB1).